The chain runs to 162 residues: Putative ankyrin repeat protein RBE_0151 (162 aa).

3 ANK repeats span residues glutamate 49–isoleucine 77, lysine 81–proline 110, and tyrosine 114–lysine 145.

This chain is Putative ankyrin repeat protein RBE_0151, found in Rickettsia bellii (strain RML369-C).